Here is a 440-residue protein sequence, read N- to C-terminus: Branched-chain amino acid permease BrnQ (440 aa).

The next 12 membrane-spanning stretches (helical) occupy residues 9-29 (YIIIIGLMLFALFFGAGNLIF), 46-66 (AGFLVTGVGLPLLAITAFVFS), 80-100 (PVFGIVFTTILYLAIGPFFAI), 121-141 (SPVSLIIFTILFFALACLLSL), 149-169 (IVGKFLTPIKLTFIGLLVAVA), 196-216 (GYLTLDALVAFVFGIIIVNAL), 227-247 (LIVVCAKAAAIAAVLLAVMYT), 284-304 (ILLGLMITVACLTTSVGLITA), 321-341 (IAVVLSVFSTLVANIGLTQLI), 348-368 (LLTMYPIAISLIFLTFLHSVF), 378-398 (SLLFAFIISLFDGLKAAGIKI), and 414-434 (IGLGWLIPAIAGGICGYILSI).

It belongs to the branched chain amino acid transporter family.

It is found in the cell membrane. Its function is as follows. Branched-chain amino acid transport system which is involved in the uptake of isoleucine and valine. Probably does not transport leucine. Together with BcaP and BraB, plays an important role in the activation of CodY, a branched-chain amino acid-responsive transcriptional regulator that controls the expression of several dozen transcription units in B.subtilis. The polypeptide is Branched-chain amino acid permease BrnQ (Bacillus subtilis (strain 168)).